The following is a 1050-amino-acid chain: Diacylglycerol kinase iota (1050 aa).

3 disordered regions span residues P53–A74, A92–E111, and S328–G356. Low complexity predominate over residues A92–G105. The segment covering S332–K347 has biased composition (basic residues). Residues P367 to N502 form the DAGKc domain. 2 ANK repeats span residues G943–L972 and T979–Q1008. A PDZ-binding motif is present at residues T1048–V1050.

The protein belongs to the eukaryotic diacylglycerol kinase family. In terms of assembly, interacts (via PDZ-binding motif) with DLG4; controls the localization of DGKI to the synapse. Interacts (via PDZ-binding motif) with DLG1. Interacts (via PDZ-binding motif) with DLG2. Interacts (via PDZ-binding motif) with DLG3. May interact with RASGRP3; involved in the regulation of RASGRP3 activity. In terms of tissue distribution, in brain, expressed in the hippocampus and cerebellum with stronger expression in the Purkinje cell layer (at protein level). Expressed in kidney.

The protein resides in the cell projection. It localises to the axon. It is found in the dendrite. Its subcellular location is the presynapse. The protein localises to the postsynapse. The protein resides in the postsynaptic density. It localises to the synaptic cell membrane. It is found in the cytoplasmic vesicle. Its subcellular location is the secretory vesicle. The protein localises to the synaptic vesicle membrane. The protein resides in the cytoplasm. It localises to the cytosol. It is found in the nucleus. It catalyses the reaction a 1,2-diacyl-sn-glycerol + ATP = a 1,2-diacyl-sn-glycero-3-phosphate + ADP + H(+). It carries out the reaction 1,2-di-(9Z-octadecenoyl)-sn-glycerol + ATP = 1,2-di-(9Z-octadecenoyl)-sn-glycero-3-phosphate + ADP + H(+). The enzyme catalyses 1-octadecanoyl-2-(5Z,8Z,11Z,14Z-eicosatetraenoyl)-sn-glycerol + ATP = 1-octadecanoyl-2-(5Z,8Z,11Z,14Z-eicosatetraenoyl)-sn-glycero-3-phosphate + ADP + H(+). The catalysed reaction is 1-octadecanoyl-2-(9Z,12Z)-octadecadienoyl-sn-glycerol + ATP = 1-octadecanoyl-2-(9Z,12Z-octadecadienoyl)-sn-glycero-3-phosphate + ADP + H(+). It functions in the pathway lipid metabolism; glycerolipid metabolism. Diacylglycerol kinase that converts diacylglycerol/DAG into phosphatidic acid/phosphatidate/PA and regulates the respective levels of these two bioactive lipids. Thereby, acts as a central switch between the signaling pathways activated by these second messengers with different cellular targets and opposite effects in numerous biological processes. Has probably no preference for any of the diacylglycerols in terms of the acyl chain composition, especially for the acyl chain at the sn-2 position. By controlling the diacylglycerol/DAG-mediated activation of RASGRP3, negatively regulates the Rap1 signaling pathway. May play a role in presynaptic diacylglycerol/DAG signaling and control neurotransmitter release during metabotropic glutamate receptor-dependent long-term depression. The chain is Diacylglycerol kinase iota from Mus musculus (Mouse).